Here is a 1045-residue protein sequence, read N- to C-terminus: Septation initiation network scaffold protein cdc11 (1045 aa).

Basic and acidic residues predominate over residues 1 to 11 (MEQLWLEHDLS). 2 disordered regions span residues 1 to 269 (MEQL…NTKD) and 282 to 329 (RGRM…PSLS). Polar residues predominate over residues 18–39 (PQEQGSDNSSEPPTTSNVNNTQ). 3 stretches are compositionally biased toward low complexity: residues 40-52 (STGR…STEH), 96-132 (KQSP…NVSN), and 152-165 (ISSS…SEGS). The span at 166–176 (LKSQQSNTRSN) shows a compositional bias: polar residues. Over residues 187-201 (ASNASSSSSVVSSPS) the composition is skewed to low complexity. 2 stretches are compositionally biased toward polar residues: residues 226–238 (NQLT…NSFE) and 320–329 (DSSNAFPSLS). At S360 the chain carries Phosphoserine. Residues 377–417 (DVGSSQSSSKTARLNSSPKSTLKTSSVKTRRSHSAQSSRKV) form a disordered region. Positions 379-403 (GSSQSSSKTARLNSSPKSTLKTSSV) are enriched in polar residues. S558 carries the post-translational modification Phosphoserine. LRR repeat units lie at residues 604-625 (RIIQ…SELC), 627-646 (SIEE…GCPV), 647-668 (TIRD…SNLL), 669-690 (NLQY…SSLI), 691-712 (HLRE…QHLD), 713-734 (GLLK…NSNL), 736-757 (RLEE…SSLQ), 758-779 (NLMV…QPMI), 780-801 (HLRI…QFPH), 802-822 (LRTL…RRLK), 846-867 (DIRN…HMFL), 868-889 (GVRY…IATS), 892-913 (NLRV…KPLQ), 914-935 (MIHR…CDIL), and 940-962 (QLNV…IDDS). Positions 1005–1043 (AWRTRRKMYAEAILLACPHLEWLDGSDVSQSSRAAFTKS) constitute an LRRCT domain.

In terms of assembly, interacts with sid4. When hyperphosphorylated, interacts with byr4. Also interacts with spg1, sid2, cdc13 and cdc16. In terms of processing, phosphorylated by cdc7 and cdk1. Hyperphosphorylated during anaphase. Dephosphorylated by par1.

It is found in the cytoplasm. Its subcellular location is the cytoskeleton. The protein resides in the microtubule organizing center. It localises to the spindle pole body. Functionally, essential for the onset of septum formation. Involved in the organization of astral microtubules during mitosis. Acts as a bridge between sid4 and the other SIN proteins mediating their association with the spindle pole body (SPB). The sid4-cdc11 complex organizes a signaling hub on the SPB which coordinates cell and nuclear division. This is Septation initiation network scaffold protein cdc11 (cdc11) from Schizosaccharomyces pombe (strain 972 / ATCC 24843) (Fission yeast).